The following is a 143-amino-acid chain: Peptide methionine sulfoxide reductase MsrB (143 aa).

The 124-residue stretch at 16-139 (DAELRRRLTP…NSAALNFESR (124 aa)) folds into the MsrB domain. Zn(2+) contacts are provided by Cys55, Cys58, Cys104, and Cys107. Catalysis depends on Cys128, which acts as the Nucleophile.

It belongs to the MsrB Met sulfoxide reductase family. It depends on Zn(2+) as a cofactor.

The catalysed reaction is L-methionyl-[protein] + [thioredoxin]-disulfide + H2O = L-methionyl-(R)-S-oxide-[protein] + [thioredoxin]-dithiol. This Burkholderia vietnamiensis (strain G4 / LMG 22486) (Burkholderia cepacia (strain R1808)) protein is Peptide methionine sulfoxide reductase MsrB.